Here is a 521-residue protein sequence, read N- to C-terminus: MASSRASSTATKTKAPDDLVAPVVKKPHIYYGSLEEKERERLAKGESGILGKEGLKAGIEAGNINITSGEVFEIEEHISERQAEVLAEFERRKRARQINVSTDDSEVKACLRALGEPITLFGEGPAERRERLRNILSVVGTDALKKTKKDDEKSKKSKEEYQQTWYHEGPNSLKVARLWIANYSLPRAMKRLEEARLHKEIPETTRASQMQELHKSLRSLNNFCSQIGDDRPISYCHFSPNSKMLATACWSGLCKLWSVPDCNLLHTLRGHNTNVGAIVFHPKSTVSLDQKDVNLASCAADGSVKLWSLDSDEPVADIEGHTVRVARVMWHPSGRFLGTTCYDRSWRLWDLEAQEEILHQEGHSMGVYDIAFHQDGSLAGTGGLDAFGRVWDLRTGRCIMFLEGHLKEIYGINFSPNGYHIATGSGDNTCKVWDLRQRRCVYTIPAHQNLVTGVKFEPIHGNFLLTGAYDNTAKIWTHPGWSPLKTLAGHEGKVMGLDISSDGQLIATCSYDRTFKLWMAE.

N6-acetyllysine is present on Lys26. 7 WD repeats span residues 228-267, 270-317, 320-359, 362-401, 404-443, 446-486, and 489-521; these read GDDRPISYCHFSPNSKMLATACWSGLCKLWSVPDCNLLHT, GHNT…PVAD, GHTVRVARVMWHPSGRFLGTTCYDRSWRLWDLEAQEEILH, GHSMGVYDIAFHQDGSLAGTGGLDAFGRVWDLRTGRCIMF, GHLKEIYGINFSPNGYHIATGSGDNTCKVWDLRQRRCVYT, AHQN…PLKT, and GHEGKVMGLDISSDGQLIATCSYDRTFKLWMAE.

In terms of assembly, component of the precatalytic spliceosome (spliceosome B complex). Component of the U4/U6-U5 tri-snRNP complex, a building block of the precatalytic spliceosome (spliceosome B complex). The U4/U6-U5 tri-snRNP complex is composed of the U4, U6 and U5 snRNAs and at least PRPF3, PRPF4, PRPF6, PRPF8, PRPF31, SNRNP200, TXNL4A, SNRNP40, SNRPB, SNRPD1, SNRPD2, SNRPD3, SNRPE, SNRPF, SNRPG, DDX23, CD2BP2, PPIH, SNU13, EFTUD2, SART1 and USP39, plus LSM2, LSM3, LSM4, LSM5, LSM6, LSM7 and LSM8. Interacts directly with PRPF18, PPIH and PRPF3. Part of a heteromeric complex containing PPIH, PRPF3 and PRPF4 that is stable in the absence of RNA. Interacts with ERCC6.

It is found in the nucleus. It localises to the nucleus speckle. Its function is as follows. Plays a role in pre-mRNA splicing as component of the U4/U6-U5 tri-snRNP complex that is involved in spliceosome assembly, and as component of the precatalytic spliceosome (spliceosome B complex). This Pongo abelii (Sumatran orangutan) protein is U4/U6 small nuclear ribonucleoprotein Prp4 (PRPF4).